Consider the following 126-residue polypeptide: UPF0292 protein TSIB_0423 (126 aa).

Residues N20–L100 enclose the Toprim domain. Mg(2+) is bound by residues E26, D69, and D71.

The protein belongs to the UPF0292 family. Requires Mg(2+) as cofactor.

The sequence is that of UPF0292 protein TSIB_0423 from Thermococcus sibiricus (strain DSM 12597 / MM 739).